Reading from the N-terminus, the 584-residue chain is Acetylcholinesterase (584 aa).

A signal peptide is located at residue alanine 1. Cysteine 70 and cysteine 97 are disulfide-bonded. Residue serine 204 is the Acyl-ester intermediate of the active site. Cysteine 258 and cysteine 273 are disulfide-bonded. N-linked (GlcNAc...) asparagine glycosylation is present at asparagine 266. The Charge relay system role is filled by glutamate 335. N-linked (GlcNAc...) asparagine glycosylation occurs at asparagine 351. An intrachain disulfide couples cysteine 410 to cysteine 530. Histidine 448 acts as the Charge relay system in catalysis. Asparagine 465 carries an N-linked (GlcNAc...) asparagine glycan.

It belongs to the type-B carboxylesterase/lipase family. In terms of assembly, homotetramer; composed of disulfide-linked homodimers. Interacts with PRIMA1. The interaction with PRIMA1 is required to anchor it to the basal lamina of cells and organize into tetramers.

It localises to the synapse. Its subcellular location is the secreted. The protein resides in the cell membrane. It catalyses the reaction acetylcholine + H2O = choline + acetate + H(+). Functionally, terminates signal transduction at the neuromuscular junction by rapid hydrolysis of the acetylcholine released into the synaptic cleft. This Oryctolagus cuniculus (Rabbit) protein is Acetylcholinesterase (ACHE).